The chain runs to 225 residues: Holliday junction branch migration complex subunit RuvA (225 aa).

Positions 1–71 (MISWISGELV…EDSDLLFGFS (71 aa)) are domain I. Positions 72-150 (SKDQKNFFIE…NELKIQEEKS (79 aa)) are domain II. Positions 151-161 (KDEFHIKDNKI) are flexible linker. Residues 161 to 225 (INKIVSDIEL…LDNDSSNIVR (65 aa)) are domain III.

Belongs to the RuvA family. As to quaternary structure, homotetramer. Forms an RuvA(8)-RuvB(12)-Holliday junction (HJ) complex. HJ DNA is sandwiched between 2 RuvA tetramers; dsDNA enters through RuvA and exits via RuvB. An RuvB hexamer assembles on each DNA strand where it exits the tetramer. Each RuvB hexamer is contacted by two RuvA subunits (via domain III) on 2 adjacent RuvB subunits; this complex drives branch migration. In the full resolvosome a probable DNA-RuvA(4)-RuvB(12)-RuvC(2) complex forms which resolves the HJ.

Its subcellular location is the cytoplasm. The RuvA-RuvB-RuvC complex processes Holliday junction (HJ) DNA during genetic recombination and DNA repair, while the RuvA-RuvB complex plays an important role in the rescue of blocked DNA replication forks via replication fork reversal (RFR). RuvA specifically binds to HJ cruciform DNA, conferring on it an open structure. The RuvB hexamer acts as an ATP-dependent pump, pulling dsDNA into and through the RuvAB complex. HJ branch migration allows RuvC to scan DNA until it finds its consensus sequence, where it cleaves and resolves the cruciform DNA. The sequence is that of Holliday junction branch migration complex subunit RuvA from Prochlorococcus marinus (strain MIT 9312).